A 334-amino-acid chain; its full sequence is UL-16 binding protein 5 (334 aa).

The first 25 residues, 1-25, serve as a signal peptide directing secretion; it reads MAAAASPAFLLRLPLLLLLSSWCRT. The Extracellular portion of the chain corresponds to 26–223; sequence GLADPHSLCY…TMSSGTAQPR (198 aa). The interval 29-117 is MHC class I alpha-1 like; the sequence is DPHSLCYDIT…IQLENYIPKE (89 aa). An intrachain disulfide couples Cys50 to Cys66. An N-linked (GlcNAc...) asparagine glycan is attached at Asn82. The interval 118–210 is MHC class I alpha-2 like; sequence PLTLQARMSC…MDSTLEPSAG (93 aa). Cys127 and Cys190 are oxidised to a cystine. Gly218 is lipidated: GPI-anchor amidated glycine. Positions 219–334 are cleaved as a propeptide — removed in mature form; sequence TAQPRATATT…YSEPLQVSIS (116 aa). A helical transmembrane segment spans residues 224–243; the sequence is ATATTLILCCLLIMCLLICS. Residues 244–334 lie on the Cytoplasmic side of the membrane; that stretch reads RHSLTQSHGH…YSEPLQVSIS (91 aa).

This sequence belongs to the MHC class I family. In terms of assembly, interacts with KLRK1/NKG2D. As to quaternary structure, (Microbial infection) In CMV-infected cells, interacts with the viral glycoprotein UL16; this interaction causes RAET1G retention in the endoplasmic reticulum and cis-Golgi and prevents binding to and activation of KLRK1/NKG2D, providing CMV with an immune evasion mechanism. Post-translationally, the functional form is cleaved C-terminally of the GPI-anchor and yields a 28 kDa protein. As to expression, isoform 1 is highly expressed in colon and in a number of tumor cell lines and highly restricted in normal tissues. Both isoforms are frequently expressed in cell lines derived from epithelial cancers, and in primary breast cancers.

The protein localises to the cell membrane. The protein resides in the endoplasmic reticulum. Its subcellular location is the secreted. Its function is as follows. Binds and activates the KLRK1/NKG2D receptor, mediating natural killer cell cytotoxicity. In terms of biological role, down-regulates the expression of KLRK1 and stimulates natural killer cells to secrete IFNG. Functionally, stimulates natural killer cells to secrete IFNG. The protein is UL-16 binding protein 5 of Homo sapiens (Human).